The primary structure comprises 79 residues: UPF0175 protein APE_0890a.1 (79 aa).

Belongs to the UPF0175 family.

The sequence is that of UPF0175 protein APE_0890a.1 from Aeropyrum pernix (strain ATCC 700893 / DSM 11879 / JCM 9820 / NBRC 100138 / K1).